The chain runs to 198 residues: IMP cyclohydrolase (198 aa).

The protein belongs to the archaeal IMP cyclohydrolase family.

It catalyses the reaction IMP + H2O = 5-formamido-1-(5-phospho-D-ribosyl)imidazole-4-carboxamide. It participates in purine metabolism; IMP biosynthesis via de novo pathway; IMP from 5-formamido-1-(5-phospho-D-ribosyl)imidazole-4-carboxamide: step 1/1. Catalyzes the cyclization of 5-formylamidoimidazole-4-carboxamide ribonucleotide to IMP. This is IMP cyclohydrolase from Methanopyrus kandleri (strain AV19 / DSM 6324 / JCM 9639 / NBRC 100938).